Consider the following 333-residue polypeptide: Adenosine deaminase (333 aa).

Residues histidine 12 and histidine 14 each contribute to the Zn(2+) site. Residues histidine 14, aspartate 16, and glycine 170 each contribute to the substrate site. Histidine 197 is a Zn(2+) binding site. Glutamate 200 functions as the Proton donor in the catalytic mechanism. Aspartate 278 contributes to the Zn(2+) binding site. Residue aspartate 279 participates in substrate binding.

Belongs to the metallo-dependent hydrolases superfamily. Adenosine and AMP deaminases family. Adenosine deaminase subfamily. Zn(2+) is required as a cofactor.

The catalysed reaction is adenosine + H2O + H(+) = inosine + NH4(+). It carries out the reaction 2'-deoxyadenosine + H2O + H(+) = 2'-deoxyinosine + NH4(+). Its function is as follows. Catalyzes the hydrolytic deamination of adenosine and 2-deoxyadenosine. This chain is Adenosine deaminase, found in Shigella sonnei (strain Ss046).